A 115-amino-acid polypeptide reads, in one-letter code: Ribonuclease P protein component (115 aa).

Belongs to the RnpA family. In terms of assembly, consists of a catalytic RNA component (M1 or rnpB) and a protein subunit.

It catalyses the reaction Endonucleolytic cleavage of RNA, removing 5'-extranucleotides from tRNA precursor.. In terms of biological role, RNaseP catalyzes the removal of the 5'-leader sequence from pre-tRNA to produce the mature 5'-terminus. It can also cleave other RNA substrates such as 4.5S RNA. The protein component plays an auxiliary but essential role in vivo by binding to the 5'-leader sequence and broadening the substrate specificity of the ribozyme. The polypeptide is Ribonuclease P protein component (Phytoplasma australiense).